Reading from the N-terminus, the 517-residue chain is ATP synthase subunit alpha 1 (517 aa).

Residue 174-181 (GDRQTGKT) participates in ATP binding.

Belongs to the ATPase alpha/beta chains family. As to quaternary structure, F-type ATPases have 2 components, CF(1) - the catalytic core - and CF(0) - the membrane proton channel. CF(1) has five subunits: alpha(3), beta(3), gamma(1), delta(1), epsilon(1). CF(0) has three main subunits: a(1), b(2) and c(9-12). The alpha and beta chains form an alternating ring which encloses part of the gamma chain. CF(1) is attached to CF(0) by a central stalk formed by the gamma and epsilon chains, while a peripheral stalk is formed by the delta and b chains.

The protein localises to the cell inner membrane. It carries out the reaction ATP + H2O + 4 H(+)(in) = ADP + phosphate + 5 H(+)(out). Functionally, produces ATP from ADP in the presence of a proton gradient across the membrane. The alpha chain is a regulatory subunit. This Polaromonas naphthalenivorans (strain CJ2) protein is ATP synthase subunit alpha 1.